The sequence spans 588 residues: Glutamyl-tRNA(Gln) amidotransferase subunit B, mitochondrial (588 aa).

The transit peptide at Met-1–Pro-109 directs the protein to the mitochondrion. The span at Ser-22–Pro-35 shows a compositional bias: low complexity. Residues Ser-22–Leu-50 form a disordered region.

The protein belongs to the GatB/GatE family. GatB subfamily. In terms of assembly, subunit of the heterotrimeric GatCAB amidotransferase (AdT) complex, composed of A, B and C subunits.

The protein localises to the mitochondrion. The enzyme catalyses L-glutamyl-tRNA(Gln) + L-glutamine + ATP + H2O = L-glutaminyl-tRNA(Gln) + L-glutamate + ADP + phosphate + H(+). Functionally, allows the formation of correctly charged Gln-tRNA(Gln) through the transamidation of misacylated Glu-tRNA(Gln) in the mitochondria. The reaction takes place in the presence of glutamine and ATP through an activated gamma-phospho-Glu-tRNA(Gln). This chain is Glutamyl-tRNA(Gln) amidotransferase subunit B, mitochondrial, found in Penicillium rubens (strain ATCC 28089 / DSM 1075 / NRRL 1951 / Wisconsin 54-1255) (Penicillium chrysogenum).